The chain runs to 855 residues: Beclin-1-like protein B (855 aa).

Disordered stretches follow at residues 92–212, 236–271, 294–380, and 407–475; these read FGKR…GSLS, LVAD…ESNN, ATIP…QKPR, and VDGG…QQQP. 2 stretches are compositionally biased toward low complexity: residues 99–123 and 131–143; these read TQSN…SLSL and QQQQ…QQQT. Over residues 144-156 the composition is skewed to polar residues; the sequence is FNDQSKLTATTPT. The segment covering 177 to 200 has biased composition (low complexity); sequence HSNNSSNGSDHGGNVNTTGVSPSS. A compositionally biased stretch (low complexity) spans 294 to 348; that stretch reads ATIPTTTTTSTPTTPSTVGGTTPSPPSSSSSSSSSSSVITSPISRISPSNITSPS. 2 stretches are compositionally biased toward polar residues: residues 368–377 and 413–445; these read LNISQVSSPQ and SGTE…TTPP. Residues 446 to 474 are compositionally biased toward low complexity; sequence LLSNSMNNSTNNLQSLQQQQQQQQQQQQQ. Residues 538 to 595 adopt a coiled-coil conformation; the sequence is EKGKTEEDLEELGKEMTLLCEEEEQLRLMIENTHQERKEVEQLTLQLQDRIATLKSLE. Residues 826–855 are disordered; that stretch reads LNNNQNNNNINNNNNNNINNNNNNNVNKRN.

The protein belongs to the beclin family.

It localises to the endosome membrane. Involved in autophagy. May be required to recruit the atg8-phosphatidylinositol conjugate and the atg12-atg5 conjugate to the pre-autophagosomal structure. This Dictyostelium discoideum (Social amoeba) protein is Beclin-1-like protein B (atg6B).